The sequence spans 174 residues: Non-classical export protein 2 homolog 1 (174 aa).

Over 1 to 7 the chain is Cytoplasmic; the sequence is MLSAADN. Residues 8-28 traverse the membrane as a helical segment; sequence LVRIINAVFLIISIGLISGLI. The Extracellular portion of the chain corresponds to 29–41; it reads GTQTKHSSRVNFC. The chain crosses the membrane as a helical span at residues 42-62; that stretch reads MFAAVYGLVTDSLYGFLANFW. Residues 63 to 69 are Cytoplasmic-facing; the sequence is TSLTYPA. The helical transmembrane segment at 70-90 threads the bilayer; sequence ILLVLDFLNFIFTFVAATALA. Over 91-122 the chain is Extracellular; it reads VGIRCHSCKNKTYLEQNKIIQGSSSRCHQSQA. The helical transmembrane segment at 123–143 threads the bilayer; it reads AVAFFYFSCFLFLIKVTVATM. The Cytoplasmic segment spans residues 144 to 174; sequence GMMQNGGFGSNTGFSRRRARRQMGIPTISQV.

Belongs to the NCE102 family.

The protein localises to the cell membrane. Functionally, involved in membrane organization. Required for the formation of membrane compartments of CAN1 (MCCs), localization of CAN1 at the MCCs and subsequent invagination of the plasma membrane at the MCCs sites. Involved in eisosome organization and might act as a sensor of sphingolipids that regulates plasma membrane function. Involved in a novel pathway of export of proteins that lack a cleavable signal sequence. Non-classical export pathway also functions as an alternative clearance/detoxification pathway to eliminate damaged material, when the basic repair pathway is not sufficient. The protein is Non-classical export protein 2 homolog 1 (FHN1) of Saccharomyces cerevisiae (strain ATCC 204508 / S288c) (Baker's yeast).